Consider the following 388-residue polypeptide: Succinate--CoA ligase [ADP-forming] subunit beta (388 aa).

Residues 9 to 244 form the ATP-grasp domain; that stretch reads KSLFAEYGLP…PSQDDAREAH (236 aa). ATP is bound by residues K46, 53 to 55, E99, T102, and E107; that span reads GRG. Positions 199 and 213 each coordinate Mg(2+). Substrate is bound by residues N264 and 321-323; that span reads GIV.

The protein belongs to the succinate/malate CoA ligase beta subunit family. As to quaternary structure, heterotetramer of two alpha and two beta subunits. Requires Mg(2+) as cofactor.

The enzyme catalyses succinate + ATP + CoA = succinyl-CoA + ADP + phosphate. It catalyses the reaction GTP + succinate + CoA = succinyl-CoA + GDP + phosphate. It functions in the pathway carbohydrate metabolism; tricarboxylic acid cycle; succinate from succinyl-CoA (ligase route): step 1/1. Its function is as follows. Succinyl-CoA synthetase functions in the citric acid cycle (TCA), coupling the hydrolysis of succinyl-CoA to the synthesis of either ATP or GTP and thus represents the only step of substrate-level phosphorylation in the TCA. The beta subunit provides nucleotide specificity of the enzyme and binds the substrate succinate, while the binding sites for coenzyme A and phosphate are found in the alpha subunit. This Shewanella sp. (strain ANA-3) protein is Succinate--CoA ligase [ADP-forming] subunit beta.